A 400-amino-acid polypeptide reads, in one-letter code: Carnosine N-methyltransferase (400 aa).

A disordered region spans residues Met1–Arg51. Low complexity predominate over residues Ser28–Gly44. S-adenosyl-L-methionine contacts are provided by Gln155, Arg158, Gly199, Glu220, Asp286, Phe287, and Cys303. Residue Asp307 coordinates carnosine. Tyr315 contributes to the S-adenosyl-L-methionine binding site. Positions 338 and 389 each coordinate carnosine.

Belongs to the carnosine N-methyltransferase family. As to quaternary structure, homodimer. Each monomer accommodates one molecule of carnosine in its active pocket, precisely anchoring the histidine imidazole ring such that only N1 is exposed and deprotonated for methylation.

It localises to the cytoplasm. The protein resides in the cytosol. Its subcellular location is the nucleus. The enzyme catalyses carnosine + S-adenosyl-L-methionine = anserine + S-adenosyl-L-homocysteine + H(+). N-methyltransferase that catalyzes the formation of anserine (beta-alanyl-N(Pi)-methyl-L-histidine) from carnosine. Anserine, a methylated derivative of carnosine (beta-alanyl-L-histidine), is an abundant constituent of vertebrate skeletal muscles. Also methylates other L-histidine-containing di- and tripeptides such as Gly-Gly-His, Gly-His and homocarnosine (GABA-His). The protein is Carnosine N-methyltransferase of Mus musculus (Mouse).